The sequence spans 464 residues: ATP synthase subunit beta (464 aa).

153–160 (GGAGVGKT) is a binding site for ATP.

The protein belongs to the ATPase alpha/beta chains family. As to quaternary structure, F-type ATPases have 2 components, CF(1) - the catalytic core - and CF(0) - the membrane proton channel. CF(1) has five subunits: alpha(3), beta(3), gamma(1), delta(1), epsilon(1). CF(0) has three main subunits: a(1), b(2) and c(9-12). The alpha and beta chains form an alternating ring which encloses part of the gamma chain. CF(1) is attached to CF(0) by a central stalk formed by the gamma and epsilon chains, while a peripheral stalk is formed by the delta and b chains.

It is found in the cell inner membrane. The catalysed reaction is ATP + H2O + 4 H(+)(in) = ADP + phosphate + 5 H(+)(out). Its function is as follows. Produces ATP from ADP in the presence of a proton gradient across the membrane. The catalytic sites are hosted primarily by the beta subunits. This Burkholderia lata (strain ATCC 17760 / DSM 23089 / LMG 22485 / NCIMB 9086 / R18194 / 383) protein is ATP synthase subunit beta.